Here is a 396-residue protein sequence, read N- to C-terminus: Probable sugar efflux transporter (396 aa).

Residues 1-14 (MTTNTVSRKVAWLR) lie on the Cytoplasmic side of the membrane. A helical membrane pass occupies residues 15-35 (VVTLAVAAFIFNTTEFVPVGL). The Periplasmic segment spans residues 36-49 (LSDIAQSFHMQTAQ). The helical transmembrane segment at 50–70 (VGIMLTIYAWVVALMSLPFML) threads the bilayer. Residues 71 to 80 (MTSQVERRKL) lie on the Cytoplasmic side of the membrane. A helical membrane pass occupies residues 81-101 (LICLFVVFIASHVLSFLSWSF). Residue threonine 102 is a topological domain, periplasmic. The helical transmembrane segment at 103–123 (VLVISRIGVAFAHAIFWSITA) threads the bilayer. Residues 124–135 (SLAIRMAPAGKR) lie on the Cytoplasmic side of the membrane. Residues 136–156 (AQALSLIATGTALAMVLGLPL) traverse the membrane as a helical segment. At 157-169 (GRIVGQYFGWRMT) the chain is on the periplasmic side. The helical transmembrane segment at 170-190 (FFAIGIGALITLLCLIKLLPL) threads the bilayer. The Cytoplasmic portion of the chain corresponds to 191–208 (LPSEHSGSLKSLPLLFRR). The helical transmembrane segment at 209 to 229 (PALMSIYLLTVVVVTAHYTAY) threads the bilayer. At 230-245 (SYIEPFVQNIAGFSAN) the chain is on the periplasmic side. A helical transmembrane segment spans residues 246–266 (FATALLLLLGGAGIIGSVIFG). At 267-274 (KLGNQYAS) the chain is on the cytoplasmic side. A helical membrane pass occupies residues 275–295 (ALVSTAIALLLVCLALLLPAA). Residues 296–298 (NSE) lie on the Periplasmic side of the membrane. The chain crosses the membrane as a helical span at residues 299–319 (IHLGVLSIFWGIAMMIIGLGM). The Cytoplasmic portion of the chain corresponds to 320-332 (QVKVLALAPDATD). Residues 333–353 (VAMALFSGIFNIGIGAGALVG) traverse the membrane as a helical segment. Residues 354–363 (NQVSLHWSMS) lie on the Periplasmic side of the membrane. The chain crosses the membrane as a helical span at residues 364–384 (MIGYVGTVPAFAALIWSIIIF). The Cytoplasmic segment spans residues 385–396 (RRWPVTLEEQTQ).

The protein belongs to the major facilitator superfamily. SotB (TC 2.A.1.2) family.

The protein localises to the cell inner membrane. Involved in the efflux of sugars. The physiological role may be the reduction of the intracellular concentration of toxic sugars or sugar metabolites. The chain is Probable sugar efflux transporter from Escherichia coli O157:H7.